The primary structure comprises 91 residues: Early E3B 10.4 kDa protein (91 aa).

The signal sequence occupies residues 1–22 (MIPRNFFFTILICAFNVCATFT). Residues 23–34 (AVATASPDCIGP) lie on the Lumenal side of the membrane. The helical transmembrane segment at 35–60 (FASYALFAFVTCICVCSIVCLVINFF) threads the bilayer. Residues 61-91 (QLVDWIFVRIAYLRHHPEYRNQNVAALLRLI) lie on the Cytoplasmic side of the membrane.

It belongs to the adenoviridae E3B family.

The protein localises to the host endoplasmic reticulum membrane. Its function is as follows. Down-regulates the EGF receptor. This chain is Early E3B 10.4 kDa protein, found in Homo sapiens (Human).